The sequence spans 244 residues: Cell division protein ZapD (244 aa).

The protein belongs to the ZapD family. Interacts with FtsZ.

It localises to the cytoplasm. Cell division factor that enhances FtsZ-ring assembly. Directly interacts with FtsZ and promotes bundling of FtsZ protofilaments, with a reduction in FtsZ GTPase activity. In Shewanella sp. (strain MR-7), this protein is Cell division protein ZapD.